Here is a 632-residue protein sequence, read N- to C-terminus: tRNA uridine 5-carboxymethylaminomethyl modification enzyme MnmG (632 aa).

13–18 contributes to the FAD binding site; sequence GGGHAG. An NAD(+)-binding site is contributed by 273-287; the sequence is GPRYCPSIEDKIHRF.

The protein belongs to the MnmG family. In terms of assembly, homodimer. Heterotetramer of two MnmE and two MnmG subunits. Requires FAD as cofactor.

It localises to the cytoplasm. In terms of biological role, NAD-binding protein involved in the addition of a carboxymethylaminomethyl (cmnm) group at the wobble position (U34) of certain tRNAs, forming tRNA-cmnm(5)s(2)U34. This is tRNA uridine 5-carboxymethylaminomethyl modification enzyme MnmG from Psychrobacter cryohalolentis (strain ATCC BAA-1226 / DSM 17306 / VKM B-2378 / K5).